The following is a 629-amino-acid chain: Rho GTPase-activating protein conundrum (629 aa).

The segment at proline 185–cysteine 294 is required for interaction with Moe. Residues serine 237–leucine 261 are disordered. Residues arginine 240–serine 258 show a composition bias toward basic and acidic residues. The region spanning valine 359–phenylalanine 565 is the Rho-GAP domain.

In terms of assembly, interacts with Moe (via FERM domain).

Its subcellular location is the cytoplasm. The protein localises to the cell membrane. It is found in the cell cortex. It localises to the cell junction. Functionally, GTPase-activating protein (GAP) for Rho1; functions with the ERM protein Moe to regulate Rho1 and control proliferation in the developing epithelium. Recruited by Moe to the cell cortex where it negatively regulates Rho1 activity. Can also promote cell proliferation independently of its GAP activity, perhaps by acting with Arf6 to positively regulate Rac1. This is Rho GTPase-activating protein conundrum from Drosophila melanogaster (Fruit fly).